Here is an 84-residue protein sequence, read N- to C-terminus: Exendin-2-long (84 aa).

A signal peptide spans 1-23 (MKSILWLCVFGLLIATLFPVSWQ). The propeptide occupies 24–44 (MAIKSRLSSEDSETDQRLFES).

This sequence belongs to the glucagon family. In terms of processing, an amidated Pro-81 is described. Such an amidation is however not compatible with the sequence displayed. Indeed cDNAs do not encode a Gly that could serve as substrate for peptide alpha-amidation. In terms of tissue distribution, expressed by the venom gland. Not expressed in the pancreas, liver, stomach, small intestine, lung, heart, kidney, spleen, ovary, and brain.

The protein localises to the secreted. In terms of biological role, has vasoactive intestinal peptide(VIP)/secretin-like biological activity. Interacts with rat and human VIP receptors 1 (VIPR1) and 2 (VIPR2), with the highest affinity for the human VIPR2. Induces hypotension that is mediated by relaxation of cardiac smooth muscle. This vasodilation may not be transduced by VIP or PACAP receptors. The sequence is that of Exendin-2-long from Heloderma suspectum (Gila monster).